The primary structure comprises 283 residues: Putative ABC transporter ATP-binding protein MA_4342 (283 aa).

Positions isoleucine 3–serine 238 constitute an ABC transporter domain. Glycine 40–serine 47 provides a ligand contact to ATP.

The protein belongs to the ABC transporter superfamily.

It localises to the cell membrane. Its function is as follows. Probably part of an ABC transporter complex. Responsible for energy coupling to the transport system. The chain is Putative ABC transporter ATP-binding protein MA_4342 from Methanosarcina acetivorans (strain ATCC 35395 / DSM 2834 / JCM 12185 / C2A).